The following is a 151-amino-acid chain: Ribosome maturation factor RimP (151 aa).

Belongs to the RimP family.

The protein localises to the cytoplasm. Functionally, required for maturation of 30S ribosomal subunits. This is Ribosome maturation factor RimP from Shewanella sp. (strain ANA-3).